Reading from the N-terminus, the 454-residue chain is Glutaredoxin domain-containing cysteine-rich protein CG31559 (454 aa).

Disordered regions lie at residues 30–88 (ETAD…QRQK) and 217–239 (RSAR…GSDS). Residues 33–45 (DSGNGSDLESTGL) show a composition bias toward polar residues. Over residues 58-69 (SSLGSDSMHGSS) the composition is skewed to low complexity. Residues 70 to 84 (TEYVRQSASQPSGQR) show a composition bias toward polar residues. A compositionally biased stretch (basic and acidic residues) spans 217 to 227 (RSARSGDEADH). The region spanning 295 to 400 (NAKNFKEKDL…QLLKPYKSMA (106 aa)) is the Glutaredoxin domain.

This sequence belongs to the GRXCR1 family.

The protein is Glutaredoxin domain-containing cysteine-rich protein CG31559 of Drosophila melanogaster (Fruit fly).